A 414-amino-acid polypeptide reads, in one-letter code: 3-aminobutyryl-CoA aminotransferase (414 aa).

An N6-(pyridoxal phosphate)lysine modification is found at Lys261.

Belongs to the class-III pyridoxal-phosphate-dependent aminotransferase family. In terms of assembly, homodimer. It depends on pyridoxal 5'-phosphate as a cofactor.

The catalysed reaction is (3S)-3-aminobutanoyl-CoA + 2-oxoglutarate = acetoacetyl-CoA + L-glutamate. It functions in the pathway amino-acid degradation; L-lysine degradation via acetate pathway. In terms of biological role, 3-aminobutyryl-CoA aminotransferase that acts specifically on coenzyme A (CoA) esters and catalyzes the conversion of 3-aminobutyryl-CoA into acetoacetyl-CoA in an alternative pathway of lysine fermentation. In Cloacimonas acidaminovorans (strain Evry), this protein is 3-aminobutyryl-CoA aminotransferase (kat).